The chain runs to 105 residues: MIPLTHYLILSGVLFAIGLMGVIVRRDIIVIFMCLEMMLSAANLSLVAFSRAQGTMGLPNYDGQALSIFILTIAAAEVAIGLALIVSLYRARRTASTQDLNTLKD.

Helical transmembrane passes span 4–24, 28–48, and 66–86; these read LTHY…GVIV, IIVI…SLVA, and LSIF…ALIV.

This sequence belongs to the complex I subunit 4L family. NDH-1 is composed of 14 different subunits. Subunits NuoA, H, J, K, L, M, N constitute the membrane sector of the complex.

The protein resides in the cell inner membrane. The enzyme catalyses a quinone + NADH + 5 H(+)(in) = a quinol + NAD(+) + 4 H(+)(out). Its function is as follows. NDH-1 shuttles electrons from NADH, via FMN and iron-sulfur (Fe-S) centers, to quinones in the respiratory chain. The immediate electron acceptor for the enzyme in this species is believed to be ubiquinone. Couples the redox reaction to proton translocation (for every two electrons transferred, four hydrogen ions are translocated across the cytoplasmic membrane), and thus conserves the redox energy in a proton gradient. The polypeptide is NADH-quinone oxidoreductase subunit K (Akkermansia muciniphila (strain ATCC BAA-835 / DSM 22959 / JCM 33894 / BCRC 81048 / CCUG 64013 / CIP 107961 / Muc)).